A 232-amino-acid polypeptide reads, in one-letter code: Glutathione S-transferase U10 (232 aa).

One can recognise a GST N-terminal domain in the interval 6 to 85 (SKVILHGTWI…YIDETWTNSP (80 aa)). Residues 16-17 (ST), 42-43 (NK), 56-57 (KI), and 69-70 (ES) each bind glutathione. Residues 91–226 (DPYERAQVRF…FIQKYRQKCL (136 aa)) form the GST C-terminal domain.

It belongs to the GST superfamily. Tau family.

The protein resides in the cytoplasm. It localises to the cytosol. It carries out the reaction RX + glutathione = an S-substituted glutathione + a halide anion + H(+). Functionally, may be involved in the conjugation of reduced glutathione to a wide number of exogenous and endogenous hydrophobic electrophiles and have a detoxification role against certain herbicides. The sequence is that of Glutathione S-transferase U10 (GSTU10) from Arabidopsis thaliana (Mouse-ear cress).